Here is a 143-residue protein sequence, read N- to C-terminus: Protein SLC31A2 (143 aa).

Residues 1–22 (MAMHFIFSDTAVLLFDFWSVHS) are Extracellular-facing. The helical transmembrane segment at 23–43 (PAGMALSVLVLLLLAVLYEGI) threads the bilayer. The Cytoplasmic segment spans residues 44 to 93 (KVGKAKLLNQVLVNLPTSISQQTIAETDGDSAGSDSFPVGRTHHRWYLCH). Ser77 bears the Phosphoserine mark. Residues 94–114 (FGQSLIHVIQVVIGYFIMLAV) form a helical membrane-spanning segment. Over 115 to 119 (MSYNT) the chain is Extracellular. Residues 120 to 140 (WIFLGVVLGSAVGYYLAYPLL) form a helical membrane-spanning segment. At 141–143 (STA) the chain is on the cytoplasmic side.

This sequence belongs to the copper transporter (Ctr) (TC 1.A.56) family. SLC31A subfamily. As to quaternary structure, oligomer. Interacts with SLC31A1; this interaction stabilizes SLC31A2 and protects it from ubiquitination and the subsequent degradation. Ubiquitinated; ubiquitination and the subsequent proteasomal degradation are prevent by SLC31A1 that stabilizes it. Ubiquitous with high expression in placenta and heart.

Its subcellular location is the membrane. The protein localises to the cytoplasmic vesicle membrane. It is found in the late endosome membrane. The protein resides in the lysosome membrane. Does not function as a copper(1+) importer in vivo. However, in vitro functions as a low-affinity copper(1+) importer. Regulator of SLC31A1 which facilitates the cleavage of the SLC31A1 ecto-domain or which stabilizes the truncated form of SLC31A1 (Truncated CTR1 form), thereby drives the SLC31A1 truncated form-dependent endosomal copper export and modulates the copper and cisplatin accumulation via SLC31A1. In Homo sapiens (Human), this protein is Protein SLC31A2.